Here is a 77-residue protein sequence, read N- to C-terminus: DNA-directed RNA polymerase subunit Rpo10 (77 aa).

Cys-7, Cys-10, Cys-44, and Cys-45 together coordinate Zn(2+).

This sequence belongs to the archaeal Rpo10/eukaryotic RPB10 RNA polymerase subunit family. In terms of assembly, part of the RNA polymerase complex. Zn(2+) is required as a cofactor.

It localises to the cytoplasm. It carries out the reaction RNA(n) + a ribonucleoside 5'-triphosphate = RNA(n+1) + diphosphate. DNA-dependent RNA polymerase (RNAP) catalyzes the transcription of DNA into RNA using the four ribonucleoside triphosphates as substrates. This chain is DNA-directed RNA polymerase subunit Rpo10, found in Aeropyrum pernix (strain ATCC 700893 / DSM 11879 / JCM 9820 / NBRC 100138 / K1).